A 1464-amino-acid chain; its full sequence is MDVLELLRASATGCYNTIFSEAWHQYVHKQIAAAVYWYGALFLLGVLLFVWFLYFKRLARLRLRDEIARSLSAVTSAATGVDHRGLRFRKRDKMLFYGRRMLRKMKNVSGQMYSSGKGYKRRAVMRFARRILQLQRENRPLEMKTVEPPAEYLEETIEGSDRVPPDALYMLQSIRIFGHFEKPIFLKLCKHTQILQLMAGDYLFKITDPDDSVYIVQSGMINVYICNADGSTLSLKTVRKGESVTSLLSFIDVLSGNSSYYKTVTAKAIEKSVVIRLPMQAFEEVFDENPDVMIRVIQVIMIRLQRVLFTALRNYLGLNAELVQNHMRNKNSSNPMATGQTTSNVQSQTSQATQSRPSGTTRTPTSPMLRLSREEHTLSDPDPNPNANNLHYHEMHGDAPYIDLYHYQQQQQSLNSPRRNSTAHVSEAAAASTASSPTTIDQRLVQSSAVDSLRRELGLGEEDAHIIEQFVLVRELEPNVTLITEGNADDVCIWFVMTGNLAVYQSNADATRASAKQDAKPEMLIHFVHPGEIVGGLAMLTGEASAYTIRSRNNSRVAFIRRAAIYQIMRQRPRIVLGLGNGVVRRLSPLVRQCDYALDWIFLESGRAVYRQDESSDSTYIVLSGRMRSVITQPNGKKEIVGEYGKGDLVGIVEMITETSRTTTVMAVRDSELAKLPEGLFNAIKLRYPIVVTRLISFLSHRFLGSMQTRGSNAYGTPVEANPVTHKYSTVALVPITDDVPLTPFTYELYHSLCAIGPVLRLTSEVVGKQLGVNIFDTANEYRLTSWLAQQEDRNIITLYQCDSSLSPWTQRCMRQADVILIVGLGERSHLVGKFEREIDKLAMRTQKELVLLYPETTNAKPANTLSWLNARPWVTKHHHVLCVKRIFTRKSQYRINDLYSRVLLSEPNMHSDFSRLARWLTGNSIGLVLGGGGARGAAHIGMLKAIQEAGIPIDMVGGVSIGALMGALWCSERNITTVTQKAREWSKKMTKWFLQLLDLTYPITSMFSGREFNKTIHDTFGDVTIEDLWIPYFTLTTDITASCHRIHTNGSLWRFVRSSMSLSGYMPPLCDPQDGHLLLDGGYVNNLPGHLWRYCRASMSIAGVFPPFCDYRDGHLLLDGCYTNNVPADVMHNLGAAHIIAIDVGSQDDTDLTNYGDDLSGWWLLYKKWNPFTSPVKVPDLPDIQSRLAYVSCVRQLEEVKNSDYCEYIRPPIDKYKTLAFGSFDEIRDVGYVFGKNYFDTMAKAGRLGRFNQWFNKEPPKRGNHASLNEYTFIDLAQIVCKLPETYVRLGTPDLFSEDEDEDFDGYISEPTTLNTDRRRIQVHRAGNSLSFSEAELDSDVELDLEMENKVDKATQSTPTLPDKRSVQTPTPSLFNLTMPIAVDEIDKSSGRVKRKLEATNTASIAEPEASPSIKAEATTQTTPPTSKRTEQDEHELEHEQVVEKQQVMDKQQGNTTNNDTKN.

Residues 1–34 (MDVLELLRASATGCYNTIFSEAWHQYVHKQIAAA) are Lumenal-facing. Residues 35–55 (VYWYGALFLLGVLLFVWFLYF) form a helical membrane-spanning segment. The Cytoplasmic portion of the chain corresponds to 56–1464 (KRLARLRLRD…GNTTNNDTKN (1409 aa)). Residue 176 to 303 (IFGHFEKPIF…IRVIQVIMIR (128 aa)) participates in a nucleoside 3',5'-cyclic phosphate binding. 2 disordered regions span residues 329 to 393 (NKNS…LHYH) and 409 to 438 (QQQQ…SSPT). Over residues 338 to 367 (TGQTTSNVQSQTSQATQSRPSGTTRTPTSP) the composition is skewed to low complexity. The segment covering 409–420 (QQQQSLNSPRRN) has biased composition (polar residues). Phosphoserine is present on Ser-421. Low complexity predominate over residues 422–438 (TAHVSEAAAASTASSPT). Residues 456 to 586 (ELGL…VVRR) and 575 to 702 (IVLG…LSHR) each bind a nucleoside 3',5'-cyclic phosphate. One can recognise a PNPLA domain in the interval 928–1094 (LVLGGGGARG…VNNLPGHLWR (167 aa)). Positions 932–937 (GGGARG) match the GXGXXG motif. The GXSXG motif lies at 959-963 (GVSIG). The active-site Nucleophile is the Ser-961. Asp-1081 acts as the Proton acceptor in catalysis. Positions 1081 to 1083 (DGG) match the DGA/G motif. Ser-1175 is subject to Phosphoserine. Disordered regions lie at residues 1352–1374 (VDKA…PTPS) and 1400–1464 (ATNT…DTKN). Residues 1429 to 1444 (KRTEQDEHELEHEQVV) are compositionally biased toward basic and acidic residues. Positions 1450–1464 (MDKQQGNTTNNDTKN) are enriched in polar residues.

This sequence belongs to the NTE family. As to quaternary structure, interacts with Pka-C3; interaction inhibits the catalytic function of Pka-C3 and the esterase activity of sws.

The protein resides in the endoplasmic reticulum membrane. The enzyme catalyses a 1-acyl-sn-glycero-3-phosphocholine + H2O = sn-glycerol 3-phosphocholine + a fatty acid + H(+). Functionally, phospholipase B that deacylates intracellular phosphatidylcholine (PtdCho), generating glycerophosphocholine (GroPtdCho). This deacylation occurs at both sn-2 and sn-1 positions of PtdCho. Its specific chemical modification by certain organophosphorus (OP) compounds leads to distal axonopathy. Plays a role in the signaling mechanism between neurons and glia that regulates glia wrapping during development of the adult brain. Essential for membrane lipid homeostasis and cell survival in both neurons and glia of the adult brain. This Drosophila grimshawi (Hawaiian fruit fly) protein is Neuropathy target esterase sws.